The primary structure comprises 574 residues: Glycine--tRNA ligase (574 aa).

2 residues coordinate substrate: arginine 96 and glutamate 162. Residues arginine 194–glutamate 196, isoleucine 204–phenylalanine 209, glutamate 327–cysteine 328, and glycine 450–arginine 453 contribute to the ATP site. Residue phenylalanine 209–glutamate 213 coordinates substrate. Residue glutamate 446–glycine 450 participates in substrate binding.

Belongs to the class-II aminoacyl-tRNA synthetase family.

The protein localises to the cytoplasm. The catalysed reaction is tRNA(Gly) + glycine + ATP = glycyl-tRNA(Gly) + AMP + diphosphate. In terms of biological role, catalyzes the attachment of glycine to tRNA(Gly). The sequence is that of Glycine--tRNA ligase from Methanococcus maripaludis (strain C7 / ATCC BAA-1331).